A 347-amino-acid chain; its full sequence is Quinolinate synthase (347 aa).

Residues histidine 47 and serine 68 each contribute to the iminosuccinate site. Cysteine 113 provides a ligand contact to [4Fe-4S] cluster. Iminosuccinate contacts are provided by residues 139–141 and serine 156; that span reads YAN. Cysteine 200 is a [4Fe-4S] cluster binding site. Iminosuccinate contacts are provided by residues 226 to 228 and threonine 243; that span reads HPE. Cysteine 297 provides a ligand contact to [4Fe-4S] cluster.

It belongs to the quinolinate synthase family. Type 1 subfamily. The cofactor is [4Fe-4S] cluster.

The protein localises to the cytoplasm. It catalyses the reaction iminosuccinate + dihydroxyacetone phosphate = quinolinate + phosphate + 2 H2O + H(+). The protein operates within cofactor biosynthesis; NAD(+) biosynthesis; quinolinate from iminoaspartate: step 1/1. Its function is as follows. Catalyzes the condensation of iminoaspartate with dihydroxyacetone phosphate to form quinolinate. In Escherichia coli O45:K1 (strain S88 / ExPEC), this protein is Quinolinate synthase.